Reading from the N-terminus, the 199-residue chain is Transgelin-2 (199 aa).

An N-acetylalanine modification is found at Ala-2. Ser-11 bears the Phosphoserine mark. 2 positions are modified to N6-acetyllysine: Lys-17 and Lys-20. The Calponin-homology (CH) domain maps to 24–136; sequence ADLEQILIQW…RTLMNLGGLA (113 aa). The residue at position 163 (Ser-163) is a Phosphoserine. Residue Lys-171 forms a Glycyl lysine isopeptide (Lys-Gly) (interchain with G-Cter in SUMO2) linkage. The Calponin-like repeat unit spans residues 174–199; sequence IGLQMGTNRGASQAGMTGYGMPRQIL. Phosphothreonine is present on Thr-180. Arg-182 and Arg-196 each carry omega-N-methylarginine.

Belongs to the calponin family.

The polypeptide is Transgelin-2 (TAGLN2) (Bos taurus (Bovine)).